We begin with the raw amino-acid sequence, 108 residues long: UPF0145 protein AF_0869 (108 aa).

This sequence belongs to the UPF0145 family.

This Archaeoglobus fulgidus (strain ATCC 49558 / DSM 4304 / JCM 9628 / NBRC 100126 / VC-16) protein is UPF0145 protein AF_0869.